We begin with the raw amino-acid sequence, 255 residues long: MSSNKASFFTRLRRLCRLTVWLFKTGKNLRGIDGGCPKSRNRAVIALGKGALAALDIGLEVGRPAPEHPNGVLVAANHVSWLDIFAMSAVYPSSFIAKQEIKSWPVLGKMGQNAGTVFINRNSRRDIEPINRAVCETLQRGQNVSFFPEARTSSGLGLLPFKAALFQSAIDAGAKVLAVALRYYDETGKRTARPSYADVGLPTCLWRIVSMKKLTIKVDFVCVADAAESEDRYALKDKIEESIRAVVADDADIAV.

The short motif at 78-83 (HVSWLD) is the HXXXXD motif element.

Belongs to the 1-acyl-sn-glycerol-3-phosphate acyltransferase family.

The protein localises to the cell inner membrane. It catalyses the reaction a 1-acyl-sn-glycero-3-phosphate + an acyl-CoA = a 1,2-diacyl-sn-glycero-3-phosphate + CoA. It functions in the pathway phospholipid metabolism; CDP-diacylglycerol biosynthesis; CDP-diacylglycerol from sn-glycerol 3-phosphate: step 2/3. Functionally, converts lysophosphatidic acid (LPA) into phosphatidic acid by incorporating acyl moiety at the 2 position. This is 1-acyl-sn-glycerol-3-phosphate acyltransferase (plsC) from Neisseria gonorrhoeae.